We begin with the raw amino-acid sequence, 94 residues long: Long neurotoxin LNTX1 (94 aa).

The signal sequence occupies residues 1–21 (MKILLLTLVVVTIMCLDLGYT). 5 disulfide bridges follow: cysteine 24–cysteine 43, cysteine 36–cysteine 64, cysteine 49–cysteine 53, cysteine 68–cysteine 79, and cysteine 80–cysteine 85.

This sequence belongs to the three-finger toxin family. Long-chain subfamily. Type II alpha-neurotoxin sub-subfamily. In terms of assembly, monomer. In terms of tissue distribution, expressed by the venom gland.

Its subcellular location is the secreted. In terms of biological role, binds with high affinity to muscular (alpha-1/CHRNA1) and neuronal (alpha-7/CHRNA7) nicotinic acetylcholine receptor (nAChR) and inhibits acetylcholine from binding to the receptor, thereby impairing neuromuscular and neuronal transmission. Recombinant LNTX1 leads to a functional block of the muscle-type acetylcholine receptors. Has a cytotoxic activity. The chain is Long neurotoxin LNTX1 from Ophiophagus hannah (King cobra).